We begin with the raw amino-acid sequence, 198 residues long: Ribosome maturation factor RimM (198 aa).

The segment at 1-21 is disordered; it reads MPPPTASTPDDSADPGPDFAD. The 74-residue stretch at 122–195 folds into the PRC barrel domain; the sequence is DDELFADDLV…RIVVRPIDGL (74 aa).

The protein belongs to the RimM family. In terms of assembly, binds ribosomal protein uS19.

Its subcellular location is the cytoplasm. In terms of biological role, an accessory protein needed during the final step in the assembly of 30S ribosomal subunit, possibly for assembly of the head region. Essential for efficient processing of 16S rRNA. May be needed both before and after RbfA during the maturation of 16S rRNA. It has affinity for free ribosomal 30S subunits but not for 70S ribosomes. The protein is Ribosome maturation factor RimM of Salinibacter ruber (strain DSM 13855 / M31).